We begin with the raw amino-acid sequence, 142 residues long: Translation initiation factor 2 subunit beta (142 aa).

The protein belongs to the eIF-2-beta/eIF-5 family. Heterotrimer composed of an alpha, a beta and a gamma chain.

In terms of biological role, eIF-2 functions in the early steps of protein synthesis by forming a ternary complex with GTP and initiator tRNA. This is Translation initiation factor 2 subunit beta from Thermococcus kodakarensis (strain ATCC BAA-918 / JCM 12380 / KOD1) (Pyrococcus kodakaraensis (strain KOD1)).